The primary structure comprises 858 residues: Potassium transporter 7 (858 aa).

2 stretches are compositionally biased toward acidic residues: residues Met-1 to Asp-16 and Gln-38 to Gly-53. Residues Met-1–Glu-68 are disordered. Topologically, residues Met-1–Lys-104 are cytoplasmic. A helical membrane pass occupies residues Val-105 to Tyr-125. At Thr-126–Ser-147 the chain is on the extracellular side. Residues Leu-148–Ala-168 form a helical membrane-spanning segment. Residues Asn-169–Lys-232 are Cytoplasmic-facing. Residues Ile-233–Pro-253 traverse the membrane as a helical segment. Residues Ala-254–Asp-269 are Extracellular-facing. A helical transmembrane segment spans residues Val-270–Leu-290. At Gln-291–Lys-297 the chain is on the cytoplasmic side. Residues Met-298–Ile-318 traverse the membrane as a helical segment. Over Tyr-319–Ser-345 the chain is Extracellular. A helical transmembrane segment spans residues Ile-346–Phe-366. Topologically, residues Ala-367–Thr-380 are cytoplasmic. The helical transmembrane segment at Phe-381–Met-401 threads the bilayer. Residues Glu-402–Ser-413 lie on the Extracellular side of the membrane. The chain crosses the membrane as a helical span at residues Ser-414 to Ala-434. Topologically, residues Ser-435 to Gln-470 are cytoplasmic. Residues Ile-471–Ile-491 form a helical membrane-spanning segment. The Extracellular portion of the chain corresponds to Ser-492–Glu-496. The chain crosses the membrane as a helical span at residues Ile-497–Thr-517. A topological domain (cytoplasmic) is located at residue Leu-518. The helical transmembrane segment at Ile-519–Leu-539 threads the bilayer. At Gly-540–Ser-552 the chain is on the extracellular side. Residues Val-553–Ile-573 form a helical membrane-spanning segment. Residues Trp-574–Val-858 lie on the Cytoplasmic side of the membrane. Residues Gln-707–Val-731 are disordered. Residues Asp-714 to Phe-725 are compositionally biased toward acidic residues. 2 positions are modified to phosphoserine: Ser-719 and Ser-721.

This sequence belongs to the HAK/KUP transporter (TC 2.A.72.3) family.

It localises to the cell membrane. In terms of biological role, probable potassium transporter. This is Potassium transporter 7 (POT7) from Arabidopsis thaliana (Mouse-ear cress).